Here is a 137-residue protein sequence, read N- to C-terminus: Large ribosomal subunit protein uL16 (137 aa).

This sequence belongs to the universal ribosomal protein uL16 family. Part of the 50S ribosomal subunit.

Its function is as follows. Binds 23S rRNA and is also seen to make contacts with the A and possibly P site tRNAs. The chain is Large ribosomal subunit protein uL16 from Rhodopseudomonas palustris (strain ATCC BAA-98 / CGA009).